A 195-amino-acid polypeptide reads, in one-letter code: Adenylate kinase (195 aa).

10–15 lines the ATP pocket; it reads GAGKGT. The segment at 30 to 59 is NMP; the sequence is STGDMLRAAVAAGTPVGLKAKAVMDAGGLV. AMP contacts are provided by residues T31, R36, 57–59, 85–88, and Q92; these read GLV and GFPR. Residues 126–143 are LID; it reads NRAAEAQAKGEAVRKDDD. Residue R127 coordinates ATP. Residue R150 coordinates AMP. An ATP-binding site is contributed by A178.

It belongs to the adenylate kinase family. As to quaternary structure, monomer.

The protein resides in the cytoplasm. The enzyme catalyses AMP + ATP = 2 ADP. The protein operates within purine metabolism; AMP biosynthesis via salvage pathway; AMP from ADP: step 1/1. In terms of biological role, catalyzes the reversible transfer of the terminal phosphate group between ATP and AMP. Plays an important role in cellular energy homeostasis and in adenine nucleotide metabolism. This Xanthobacter autotrophicus (strain ATCC BAA-1158 / Py2) protein is Adenylate kinase.